The chain runs to 286 residues: GTP cyclohydrolase MptA (286 aa).

This sequence belongs to the GTP cyclohydrolase IV family. As to quaternary structure, homodimer. It depends on Fe(2+) as a cofactor.

It catalyses the reaction GTP + H2O = 7,8-dihydroneopterin 2',3'-cyclic phosphate + formate + diphosphate + H(+). The protein operates within cofactor biosynthesis; 5,6,7,8-tetrahydromethanopterin biosynthesis. Converts GTP to 7,8-dihydro-D-neopterin 2',3'-cyclic phosphate, the first intermediate in the biosynthesis of coenzyme methanopterin. In Thermoplasma acidophilum (strain ATCC 25905 / DSM 1728 / JCM 9062 / NBRC 15155 / AMRC-C165), this protein is GTP cyclohydrolase MptA.